The sequence spans 104 residues: Large ribosomal subunit protein uL24 (104 aa).

Belongs to the universal ribosomal protein uL24 family. As to quaternary structure, part of the 50S ribosomal subunit.

In terms of biological role, one of two assembly initiator proteins, it binds directly to the 5'-end of the 23S rRNA, where it nucleates assembly of the 50S subunit. Functionally, one of the proteins that surrounds the polypeptide exit tunnel on the outside of the subunit. The protein is Large ribosomal subunit protein uL24 of Colwellia psychrerythraea (strain 34H / ATCC BAA-681) (Vibrio psychroerythus).